The following is a 130-amino-acid chain: 3-hydroxyisobutyrate dehydrogenase, mitochondrial (130 aa).

NAD(+) contacts are provided by residues 1-17 (TPVG…PMAK), 25-26 (LP), and Asn30. Position 43 is an N6-acetyllysine (Lys43). An N6-acetyllysine; alternate modification is found at Lys47. Lys47 is modified (N6-succinyllysine; alternate). An N6-succinyllysine modification is found at Lys101.

This sequence belongs to the HIBADH-related family. 3-hydroxyisobutyrate dehydrogenase subfamily. Homodimer.

The protein resides in the mitochondrion. It carries out the reaction 3-hydroxy-2-methylpropanoate + NAD(+) = 2-methyl-3-oxopropanoate + NADH + H(+). It functions in the pathway amino-acid degradation; L-valine degradation. This is 3-hydroxyisobutyrate dehydrogenase, mitochondrial from Mesocricetus auratus (Golden hamster).